The following is a 211-amino-acid chain: Sec-independent protein translocase protein TatB (211 aa).

The helical transmembrane segment at 1-21 (MFDIGVGELTLIAVVALVVLG) threads the bilayer. Residues 175–211 (AHLTSAPAPPVTVAPVDAGTSASPTPSEPTKIQEKQP) form a disordered region. Polar residues predominate over residues 194 to 204 (TSASPTPSEPT).

Belongs to the TatB family. The Tat system comprises two distinct complexes: a TatABC complex, containing multiple copies of TatA, TatB and TatC subunits, and a separate TatA complex, containing only TatA subunits. Substrates initially bind to the TatABC complex, which probably triggers association of the separate TatA complex to form the active translocon.

The protein resides in the cell inner membrane. In terms of biological role, part of the twin-arginine translocation (Tat) system that transports large folded proteins containing a characteristic twin-arginine motif in their signal peptide across membranes. Together with TatC, TatB is part of a receptor directly interacting with Tat signal peptides. TatB may form an oligomeric binding site that transiently accommodates folded Tat precursor proteins before their translocation. The polypeptide is Sec-independent protein translocase protein TatB (Xanthomonas oryzae pv. oryzae (strain MAFF 311018)).